We begin with the raw amino-acid sequence, 291 residues long: T-cell leukemia homeobox protein 3 (291 aa).

The segment at 1 to 56 is disordered; the sequence is MEAPASAQTPHPHEPISFGIDQILNSPDQDSAPAPRGPDGASYLGGPPGGRPGATY. Positions 166 to 225 form a DNA-binding region, homeobox; it reads RKKPRTSFSRVQICELEKRFHRQKYLASAERAALAKSLKMTDAQVKTWFQNRRTKWRRQT.

It localises to the nucleus. The polypeptide is T-cell leukemia homeobox protein 3 (TLX3) (Homo sapiens (Human)).